The chain runs to 166 residues: Large ribosomal subunit protein uL10 (166 aa).

Belongs to the universal ribosomal protein uL10 family. In terms of assembly, part of the ribosomal stalk of the 50S ribosomal subunit. The N-terminus interacts with L11 and the large rRNA to form the base of the stalk. The C-terminus forms an elongated spine to which L12 dimers bind in a sequential fashion forming a multimeric L10(L12)X complex.

Forms part of the ribosomal stalk, playing a central role in the interaction of the ribosome with GTP-bound translation factors. This Aeromonas salmonicida (strain A449) protein is Large ribosomal subunit protein uL10.